The following is a 219-amino-acid chain: Endo-type membrane-bound lytic murein transglycosylase A-like protein (219 aa).

Belongs to the transglycosylase Slt family.

It carries out the reaction Endolytic cleavage of the (1-&gt;4)-beta-glycosidic linkage between N-acetylmuramic acid (MurNAc) and N-acetylglucosamine (GlcNAc) residues in peptidoglycan with concomitant formation of a 1,6-anhydrobond in the MurNAc residue.. Murein-degrading enzyme. May play a role in recycling of muropeptides during cell elongation and/or cell division (Potential). The chain is Endo-type membrane-bound lytic murein transglycosylase A-like protein from Shigella flexneri.